Consider the following 991-residue polypeptide: Polyribonucleotide nucleotidyltransferase 2, mitochondrial (991 aa).

The transit peptide at 1–39 (MSSIVNRASSASLPNFLAWRALGFRTICSGRLGFAPSVP) directs the protein to the mitochondrion. Residues 609 to 667 (PRLATLKYSNDSLRTLIGPMGVLKRKIEVETGARLSIDNGTLTIVAKNQDVMEKAQEQV) enclose the KH domain. Residues 678 to 746 (GGVYKGTVSS…VRGNIKLSRK (69 aa)) form the S1 motif 1 domain. The segment at 813–865 (EAEKSSPVNDNDKPRRAATSKPDRKPKSTASKLIATQKEEEALESIAPEETSA) is disordered. Positions 822-838 (DNDKPRRAATSKPDRKP) are enriched in basic and acidic residues. Residues 925-987 (GTEMTATVDH…GVPVMALVDE (63 aa)) enclose the S1 motif 2 domain.

This sequence belongs to the polyribonucleotide nucleotidyltransferase family.

The protein resides in the mitochondrion. The enzyme catalyses RNA(n+1) + phosphate = RNA(n) + a ribonucleoside 5'-diphosphate. In terms of biological role, involved in the 3'-end maturation of mitochondrial mRNAs, rRNAs and tRNAs. Functions as a poly(A) mRNA 3'-5' degrading phosphorylase and is required for the degradation of highly expressed transcripts of non-coding regions. In Arabidopsis thaliana (Mouse-ear cress), this protein is Polyribonucleotide nucleotidyltransferase 2, mitochondrial (PNP2).